The sequence spans 509 residues: ATP synthase subunit alpha (509 aa).

169-176 lines the ATP pocket; sequence GDRQTGKT.

This sequence belongs to the ATPase alpha/beta chains family. F-type ATPases have 2 components, CF(1) - the catalytic core - and CF(0) - the membrane proton channel. CF(1) has five subunits: alpha(3), beta(3), gamma(1), delta(1), epsilon(1). CF(0) has three main subunits: a(1), b(2) and c(9-12). The alpha and beta chains form an alternating ring which encloses part of the gamma chain. CF(1) is attached to CF(0) by a central stalk formed by the gamma and epsilon chains, while a peripheral stalk is formed by the delta and b chains.

The protein resides in the cell inner membrane. The enzyme catalyses ATP + H2O + 4 H(+)(in) = ADP + phosphate + 5 H(+)(out). Produces ATP from ADP in the presence of a proton gradient across the membrane. The alpha chain is a regulatory subunit. This is ATP synthase subunit alpha from Sinorhizobium medicae (strain WSM419) (Ensifer medicae).